Here is a 435-residue protein sequence, read N- to C-terminus: Proline--tRNA ligase (435 aa).

This sequence belongs to the class-II aminoacyl-tRNA synthetase family. ProS type 2 subfamily. Homodimer.

Its subcellular location is the cytoplasm. The enzyme catalyses tRNA(Pro) + L-proline + ATP = L-prolyl-tRNA(Pro) + AMP + diphosphate. Functionally, catalyzes the attachment of proline to tRNA(Pro) in a two-step reaction: proline is first activated by ATP to form Pro-AMP and then transferred to the acceptor end of tRNA(Pro). This chain is Proline--tRNA ligase (proS), found in Sulfurimonas denitrificans (strain ATCC 33889 / DSM 1251) (Thiomicrospira denitrificans (strain ATCC 33889 / DSM 1251)).